We begin with the raw amino-acid sequence, 568 residues long: Multidrug and toxin extrusion protein 1 (568 aa).

Methionine 1 carries the post-translational modification N-acetylmethionine. Topologically, residues 1 to 36 (MEAPVELGPGGRQASPERRHWLRCLVLSDFREELRA) are cytoplasmic. Residues 37-57 (LLVLACPAFLAQLMVFLISFV) form a helical membrane-spanning segment. At 58-71 (SSVFCGHLSKLELN) the chain is on the extracellular side. A helical membrane pass occupies residues 72–92 (AVTLAIAVINVMGVSVGFGLS). Topologically, residues 93-119 (SACDTLISQTYGSRNLKHVGVILQRGS) are cytoplasmic. Residues 120-140 (LILLLCCLPCWALFLNTQHIL) traverse the membrane as a helical segment. At 141–151 (LLFRQDPAVSR) the chain is on the extracellular side. The chain crosses the membrane as a helical span at residues 152–172 (LTQTYVTIFIPALPATFLYTL). Residues 173 to 175 (QVK) lie on the Cytoplasmic side of the membrane. Residues 176-196 (YLLNQGIVLPQVVTGVAANLV) traverse the membrane as a helical segment. Over 197–214 (NALANYLFVYQLHLGVMG) the chain is Extracellular. The chain crosses the membrane as a helical span at residues 215–235 (SALANTVAQFTLALLLFLYIL). Topologically, residues 236 to 255 (RSKVYQATWGGWSLECLQDW) are cytoplasmic. The helical transmembrane segment at 256–278 (ASFFRLAIPSMLMLCMEWWAYEI) threads the bilayer. The Extracellular segment spans residues 279 to 294 (GSFLSGILGMVELGAQ). Residues 295-315 (SVTYELAVIVYMIPMGLSVAV) traverse the membrane as a helical segment. Over 316–335 (NVRVGNALGAGNIEQAKKSS) the chain is Cytoplasmic. The chain crosses the membrane as a helical span at residues 336 to 356 (AVALLVTELIAVVFCVMLLSC). Residues 357 to 369 (KDLVGYIFTSDRD) lie on the Extracellular side of the membrane. Residues 370-390 (IIALVAQVTPIYAVSHLFESL) form a helical membrane-spanning segment. The Cytoplasmic segment spans residues 391-407 (AGTSGGILRGSGNQKFG). The helical transmembrane segment at 408-430 (AIVNAIGYYVVGLPIGIALMFAA) threads the bilayer. Over 431–433 (KLG) the chain is Extracellular. A helical transmembrane segment spans residues 434-456 (VIGLWLGIVVCAVSQAVCFLGFI). The Cytoplasmic segment spans residues 457-544 (ARLNWTKACQ…LSGKQLALRR (88 aa)). The chain crosses the membrane as a helical span at residues 545–565 (GLLLLGVILVLLAGILVKVYV). Residues 566-568 (RTQ) are Extracellular-facing.

It belongs to the multi antimicrobial extrusion (MATE) (TC 2.A.66.1) family. As to expression, predominantly expressed in kidney and liver.

It is found in the cell membrane. It localises to the apical cell membrane. The catalysed reaction is thiamine(out) + H(+)(in) = thiamine(in) + H(+)(out). The enzyme catalyses estrone 3-sulfate(in) + H(+)(out) = estrone 3-sulfate(out) + H(+)(in). It catalyses the reaction creatinine(in) + H(+)(out) = creatinine(out) + H(+)(in). It carries out the reaction agmatine(in) + H(+)(out) = agmatine(out) + H(+)(in). Its function is as follows. Multidrug efflux pump that functions as a H(+)/organic cation antiporter. Plays a physiological role in the excretion of cationic compounds including endogenous metabolites, drugs, toxins through the kidney and liver, into urine and bile respectively. Mediates the efflux of endogenous compounds such as creatinine, vitamin B1/thiamine, agmatine and estrone-3-sulfate. May also contribute to regulate the transport of cationic compounds in testis across the blood-testis-barrier. The chain is Multidrug and toxin extrusion protein 1 (SLC47A1) from Oryctolagus cuniculus (Rabbit).